A 1400-amino-acid polypeptide reads, in one-letter code: Tensin-2 (1400 aa).

The Phorbol-ester/DAG-type zinc finger occupies 31-79 (PHSFREKVFRKKTPVCAVCKVTIDGTGVSCRVCKVATHRKCEAKVTSSC). Phosphothreonine is present on Thr-91. Phosphoserine occurs at positions 118 and 120. Positions 122 to 294 (DPLMERRWDL…SYFSGLLSGS (173 aa)) constitute a Phosphatase tensin-type domain. Residue Cys-231 is the Phosphocysteine intermediate of the active site. The C2 tensin-type domain occupies 299-425 (SSPLFLHYVF…ASVEFVFSSS (127 aa)). A disordered region spans residues 425–444 (SPEKVKGNTPRNDPSVSVDY). The segment covering 433–444 (TPRNDPSVSVDY) has biased composition (polar residues). At Ser-455 the chain carries Phosphoserine. Tyr-456 is modified (phosphotyrosine). Residue Ser-466 is modified to Phosphoserine. Thr-474 carries the phosphothreonine modification. At Ser-481 the chain carries Phosphoserine. Position 483 is a phosphotyrosine (Tyr-483). Residues 488 to 536 (RVPRQTPPAPSPELPPPPMLSVSSDSGHSSTLTTEHTAESPGRPPPTAA) are disordered. The segment covering 492-506 (QTPPAPSPELPPPPM) has biased composition (pro residues). At Arg-555 the chain carries Omega-N-methylarginine. The segment at 809–1114 (CGSPSEGRGY…DVTQPPEHPL (306 aa)) is disordered. Phosphoserine occurs at positions 820, 825, 830, 832, and 835. Polar residues-rich tracts occupy residues 898-917 (CSAS…SSPV) and 929-940 (TRSPSLAPTQRL). Thr-909 is subject to Phosphothreonine. 3 positions are modified to phosphoserine: Ser-931, Ser-941, and Ser-972. Thr-977 is modified (phosphothreonine). Residues Ser-991 and Ser-1003 each carry the phosphoserine modification. Pro residues predominate over residues 1046–1056 (PEPPQSSPTPA). Residues 1082–1098 (SGQQPSPPARSTNQHVT) are compositionally biased toward polar residues. Phosphoserine is present on Ser-1087. The SH2 domain occupies 1131–1238 (WYKPHLSRDQ…SLPCCLRIPS (108 aa)). At Thr-1173 the chain carries Phosphothreonine. At Ser-1238 the chain carries Phosphoserine. Residues 1266-1399 (ACSVLYLTSV…FITKVLLGQR (134 aa)) form the PTB domain.

The protein belongs to the PTEN phosphatase protein family. Interacts with AXL. Interacts with SYK; leading to its phosphorylation. Interacts with SQSTM1 (via PB1 domain); the interaction leads to sequestration of TNS2 in cytoplasmic aggregates with SQSTM1 and promotes TNS2 ubiquitination and proteasomal degradation. Post-translationally, ubiquitinated following sequestration in cytoplasmic aggregates with SQSTM1, leading to proteasomal degradation. As to expression, in the adult kidney, expressed mainly in glomeruli (at protein level). In the newborn kidney, localizes on the basal surface of podocytes along the glomerular basement membrane and not in endothelial cells. Low expression levels in anabolic skeletal muscles.

Its subcellular location is the cell junction. The protein resides in the focal adhesion. It is found in the cell membrane. The protein localises to the cytoplasm. The enzyme catalyses O-phospho-L-tyrosyl-[protein] + H2O = L-tyrosyl-[protein] + phosphate. Tyrosine-protein phosphatase which regulates cell motility, proliferation and muscle-response to insulin. Phosphatase activity is mediated by binding to phosphatidylinositol-3,4,5-triphosphate (PtdIns(3,4,5)P3) via the SH2 domain. In muscles and under catabolic conditions, dephosphorylates IRS1 leading to its degradation and muscle atrophy. Negatively regulates PI3K-AKT pathway activation. Dephosphorylates nephrin NPHS1 in podocytes which affects mTORC1 complex activity. Under normal glucose conditions, NPHS1 outcompetes IRS1 for binding to phosphatidylinositol 3-kinase (PI3K) which balances mTORC1 activity but high glucose conditions lead to up-regulation of TNS2, increased NPHS1 dephosphorylation and activation of mTORC1, contributing to podocyte hypertrophy and proteinuria. Required for correct podocyte morphology, podocyte-glomerular basement membrane interaction and integrity of the glomerular filtration barrier. Enhances RHOA activation in the presence of DLC1. Plays a role in promoting DLC1-dependent remodeling of the extracellular matrix. In Mus musculus (Mouse), this protein is Tensin-2 (Tns2).